The sequence spans 455 residues: Bifunctional protein GlmU (455 aa).

Residues 1 to 228 form a pyrophosphorylase region; the sequence is MYKCALVLAA…FEETIGVNSR (228 aa). UDP-N-acetyl-alpha-D-glucosamine contacts are provided by residues 8–11, Lys-22, Gln-73, and 78–79; these read LAAG and GT. Position 103 (Asp-103) interacts with Mg(2+). The UDP-N-acetyl-alpha-D-glucosamine site is built by Gly-140, Glu-154, Asn-169, and Asn-226. Asn-226 lines the Mg(2+) pocket. Positions 229 to 249 are linker; the sequence is AQLAQAEEILKDRINLKHMEN. The tract at residues 250–455 is N-acetyltransferase; that stretch reads GVTLIDPKTT…GWVDKKGLKK (206 aa). Residues Arg-331 and Lys-349 each contribute to the UDP-N-acetyl-alpha-D-glucosamine site. His-361 (proton acceptor) is an active-site residue. Tyr-364 and Asn-375 together coordinate UDP-N-acetyl-alpha-D-glucosamine. Residues 384–385, Ala-421, and Arg-438 each bind acetyl-CoA; that span reads NY.

It in the N-terminal section; belongs to the N-acetylglucosamine-1-phosphate uridyltransferase family. The protein in the C-terminal section; belongs to the transferase hexapeptide repeat family. In terms of assembly, homotrimer. Mg(2+) serves as cofactor.

It is found in the cytoplasm. It catalyses the reaction alpha-D-glucosamine 1-phosphate + acetyl-CoA = N-acetyl-alpha-D-glucosamine 1-phosphate + CoA + H(+). The catalysed reaction is N-acetyl-alpha-D-glucosamine 1-phosphate + UTP + H(+) = UDP-N-acetyl-alpha-D-glucosamine + diphosphate. Its pathway is nucleotide-sugar biosynthesis; UDP-N-acetyl-alpha-D-glucosamine biosynthesis; N-acetyl-alpha-D-glucosamine 1-phosphate from alpha-D-glucosamine 6-phosphate (route II): step 2/2. It functions in the pathway nucleotide-sugar biosynthesis; UDP-N-acetyl-alpha-D-glucosamine biosynthesis; UDP-N-acetyl-alpha-D-glucosamine from N-acetyl-alpha-D-glucosamine 1-phosphate: step 1/1. It participates in bacterial outer membrane biogenesis; LPS lipid A biosynthesis. In terms of biological role, catalyzes the last two sequential reactions in the de novo biosynthetic pathway for UDP-N-acetylglucosamine (UDP-GlcNAc). The C-terminal domain catalyzes the transfer of acetyl group from acetyl coenzyme A to glucosamine-1-phosphate (GlcN-1-P) to produce N-acetylglucosamine-1-phosphate (GlcNAc-1-P), which is converted into UDP-GlcNAc by the transfer of uridine 5-monophosphate (from uridine 5-triphosphate), a reaction catalyzed by the N-terminal domain. The chain is Bifunctional protein GlmU from Clostridium botulinum (strain Eklund 17B / Type B).